Reading from the N-terminus, the 450-residue chain is Phosphoglucosamine mutase (450 aa).

Ser-101 functions as the Phosphoserine intermediate in the catalytic mechanism. Residues Ser-101, Asp-240, Asp-242, and Asp-244 each contribute to the Mg(2+) site. A Phosphoserine modification is found at Ser-101.

Belongs to the phosphohexose mutase family. It depends on Mg(2+) as a cofactor. Post-translationally, activated by phosphorylation.

It carries out the reaction alpha-D-glucosamine 1-phosphate = D-glucosamine 6-phosphate. Catalyzes the conversion of glucosamine-6-phosphate to glucosamine-1-phosphate. The polypeptide is Phosphoglucosamine mutase (Streptococcus pneumoniae (strain JJA)).